The primary structure comprises 157 residues: Phosphopantetheine adenylyltransferase (157 aa).

T10 serves as a coordination point for substrate. ATP is bound by residues 10 to 11 (TF) and H18. Substrate-binding residues include K42, L74, and R88. Residues 89–91 (GLR), E99, and 124–130 (NAFISSS) contribute to the ATP site.

Belongs to the bacterial CoaD family. In terms of assembly, homohexamer. Mg(2+) serves as cofactor.

It localises to the cytoplasm. The enzyme catalyses (R)-4'-phosphopantetheine + ATP + H(+) = 3'-dephospho-CoA + diphosphate. It functions in the pathway cofactor biosynthesis; coenzyme A biosynthesis; CoA from (R)-pantothenate: step 4/5. Functionally, reversibly transfers an adenylyl group from ATP to 4'-phosphopantetheine, yielding dephospho-CoA (dPCoA) and pyrophosphate. The protein is Phosphopantetheine adenylyltransferase of Helicobacter pylori (strain Shi470).